The following is a 185-amino-acid chain: Probable chorismate pyruvate-lyase (185 aa).

The substrate site is built by arginine 80, leucine 118, and glutamate 170.

This sequence belongs to the UbiC family.

Its subcellular location is the cytoplasm. The enzyme catalyses chorismate = 4-hydroxybenzoate + pyruvate. It participates in cofactor biosynthesis; ubiquinone biosynthesis. Functionally, removes the pyruvyl group from chorismate, with concomitant aromatization of the ring, to provide 4-hydroxybenzoate (4HB) for the ubiquinone pathway. This Pseudomonas putida (strain ATCC 47054 / DSM 6125 / CFBP 8728 / NCIMB 11950 / KT2440) protein is Probable chorismate pyruvate-lyase.